A 451-amino-acid chain; its full sequence is POC1 centriolar protein homolog B (451 aa).

WD repeat units lie at residues 16–55 (GHKAAITSLDLSPNGKQLATASWDTFLMLWNFKPHARAYR), 58–99 (GHKD…SEFK), 101–139 (HTAPVRSVDFSADGQFLATASEDKSIKVWSMYRQRFLYS), 142–181 (RHTHWVRCAKFSPDGRLIVSCSEDKTIKIWDTTNKQCVNN), 183–223 (SDSV…LLQH), 226–265 (VHSGGVNCISFHPSDNYLVTASSDGTLKILDLLEGRLIYT), and 268–307 (GHTGPVFTVSFSKGGELFASGGADTQVLLWRTNFDELHCK). Phosphoserine is present on S321. The tract at residues 372–394 (PECSPTTTKKKTEDMSDLPSESQ) is disordered. The stretch at 404-443 (ALEHIMEQLNVLTQTVSILEQRLTLTEDKLKDCLENQQKL) forms a coiled coil.

This sequence belongs to the WD repeat POC1 family. As to quaternary structure, interacts with POC1A. Interacts with FAM161A. Interacts with CEP44; the interaction is direct and recruits POC1B to centriolar microtubules. Forms a microtubule-associated complex with POC5, CETN2 and FAM161A. Interacts with CCDC15. Phosphorylated in mitotic cells that may be mediated by CDK1.

Its subcellular location is the cytoplasm. The protein resides in the cytoskeleton. It is found in the microtubule organizing center. It localises to the centrosome. The protein localises to the centriole. Its subcellular location is the cilium basal body. The protein resides in the spindle pole. Plays an important role in centriole assembly and/or stability and ciliogenesis. Involved in early steps of centriole duplication, as well as in the later steps of centriole length control. Acts in concert with POC1A to ensure centriole integrity and proper mitotic spindle formation. Required for primary cilia formation, ciliary length and also cell proliferation. Required for retinal integrity. Acts as a positive regulator of centriole elongation. The polypeptide is POC1 centriolar protein homolog B (POC1B) (Pongo abelii (Sumatran orangutan)).